The following is a 179-amino-acid chain: NADH dehydrogenase [ubiquinone] 1 beta subcomplex subunit 9 (179 aa).

N-acetylalanine is present on alanine 2. Position 85 is a phosphoserine (serine 85). The segment at 139-160 (QLQEETPVGGPRTEALPPARKQ) is disordered.

This sequence belongs to the complex I LYR family. In terms of assembly, mammalian complex I is composed of 45 different subunits.

The protein localises to the mitochondrion inner membrane. In terms of biological role, accessory subunit of the mitochondrial membrane respiratory chain NADH dehydrogenase (Complex I), that is believed to be not involved in catalysis. Complex I functions in the transfer of electrons from NADH to the respiratory chain. The immediate electron acceptor for the enzyme is believed to be ubiquinone. The sequence is that of NADH dehydrogenase [ubiquinone] 1 beta subcomplex subunit 9 (NDUFB9) from Bos taurus (Bovine).